The following is a 43-amino-acid chain: Metallothionein B (43 aa).

A beta region spans residues 1 to 16 (SCAGSCKCKNCRCRSC). A divalent metal cation-binding residues include Cys2, Cys6, Cys8, Cys11, Cys13, Cys16, Cys20, Cys21, Cys23, Cys24, Cys28, Cys31, Cys35, and Cys37. The interval 17-43 (RKSCCSCCPAGCNNCVKGCVCKEPASS) is alpha.

Belongs to the metallothionein superfamily. Type 1 family.

Functionally, metallothioneins have a high content of cysteine residues that bind various heavy metals. This chain is Metallothionein B, found in Colinus virginianus (Northern bobwhite).